The primary structure comprises 388 residues: Succinate--CoA ligase [ADP-forming] subunit beta (388 aa).

The ATP-grasp domain occupies Lys9 to His244. ATP is bound by residues Lys46, Gly53–Gly55, Glu99, Thr102, and Glu107. Residues Asn199 and Asp213 each contribute to the Mg(2+) site. Residues Asn264 and Gly321–Val323 each bind substrate.

It belongs to the succinate/malate CoA ligase beta subunit family. In terms of assembly, heterotetramer of two alpha and two beta subunits. Mg(2+) is required as a cofactor.

The catalysed reaction is succinate + ATP + CoA = succinyl-CoA + ADP + phosphate. It catalyses the reaction GTP + succinate + CoA = succinyl-CoA + GDP + phosphate. Its pathway is carbohydrate metabolism; tricarboxylic acid cycle; succinate from succinyl-CoA (ligase route): step 1/1. Its function is as follows. Succinyl-CoA synthetase functions in the citric acid cycle (TCA), coupling the hydrolysis of succinyl-CoA to the synthesis of either ATP or GTP and thus represents the only step of substrate-level phosphorylation in the TCA. The beta subunit provides nucleotide specificity of the enzyme and binds the substrate succinate, while the binding sites for coenzyme A and phosphate are found in the alpha subunit. This Hahella chejuensis (strain KCTC 2396) protein is Succinate--CoA ligase [ADP-forming] subunit beta.